Here is a 64-residue protein sequence, read N- to C-terminus: MVFLKKSLLLVLFVGLVSLSICEENKREEHEEVEENAEKAEEKRGWMSKIASGIGTFLSGVQQG.

Residues 1-22 (MVFLKKSLLLVLFVGLVSLSIC) form the signal peptide. Residues 23–44 (EENKREEHEEVEENAEKAEEKR) constitute a propeptide that is removed on maturation. Glutamine amide is present on Q63.

Expressed by the skin glands.

The protein resides in the secreted. In terms of biological role, antimicrobial peptide against both Gram-positive and Gram-negative bacteria. In Phyllomedusa sauvagei (Sauvage's leaf frog), this protein is Phylloxin-S1.